The chain runs to 294 residues: Bifunctional protein FolD (294 aa).

Residues 166–168 (GRS), Ser-191, and Ile-232 contribute to the NADP(+) site.

It belongs to the tetrahydrofolate dehydrogenase/cyclohydrolase family. As to quaternary structure, homodimer.

It carries out the reaction (6R)-5,10-methylene-5,6,7,8-tetrahydrofolate + NADP(+) = (6R)-5,10-methenyltetrahydrofolate + NADPH. It catalyses the reaction (6R)-5,10-methenyltetrahydrofolate + H2O = (6R)-10-formyltetrahydrofolate + H(+). Its pathway is one-carbon metabolism; tetrahydrofolate interconversion. Catalyzes the oxidation of 5,10-methylenetetrahydrofolate to 5,10-methenyltetrahydrofolate and then the hydrolysis of 5,10-methenyltetrahydrofolate to 10-formyltetrahydrofolate. This Afipia carboxidovorans (strain ATCC 49405 / DSM 1227 / KCTC 32145 / OM5) (Oligotropha carboxidovorans) protein is Bifunctional protein FolD.